The primary structure comprises 96 residues: Co-chaperonin GroES 2 (96 aa).

This sequence belongs to the GroES chaperonin family. In terms of assembly, heptamer of 7 subunits arranged in a ring. Interacts with the chaperonin GroEL.

It localises to the cytoplasm. Its function is as follows. Together with the chaperonin GroEL, plays an essential role in assisting protein folding. The GroEL-GroES system forms a nano-cage that allows encapsulation of the non-native substrate proteins and provides a physical environment optimized to promote and accelerate protein folding. GroES binds to the apical surface of the GroEL ring, thereby capping the opening of the GroEL channel. The sequence is that of Co-chaperonin GroES 2 from Vibrio parahaemolyticus serotype O3:K6 (strain RIMD 2210633).